A 452-amino-acid chain; its full sequence is Pentatricopeptide repeat-containing protein At2g30780 (452 aa).

7 PPR repeats span residues 137 to 171 (TASV…THCA), 173 to 207 (TVVT…KLPP), 208 to 242 (NSVT…PVEP), 243 to 273 (DTDT…IKDQ), 350 to 384 (KSSI…GWKL), 385 to 419 (CRSL…NYGL), and 420 to 452 (VTKT…KRGL).

Belongs to the PPR family. P subfamily.

This Arabidopsis thaliana (Mouse-ear cress) protein is Pentatricopeptide repeat-containing protein At2g30780.